A 514-amino-acid polypeptide reads, in one-letter code: 2,3-bisphosphoglycerate-independent phosphoglycerate mutase (514 aa).

Mn(2+) contacts are provided by D14 and S64. The Phosphoserine intermediate role is filled by S64. Residues H125, 155–156, R187, R193, 263–266, and K336 each bind substrate; these read RD and RADR. Residues D403, H407, D444, H445, and H463 each coordinate Mn(2+).

It belongs to the BPG-independent phosphoglycerate mutase family. As to quaternary structure, monomer. Requires Mn(2+) as cofactor.

The enzyme catalyses (2R)-2-phosphoglycerate = (2R)-3-phosphoglycerate. The protein operates within carbohydrate degradation; glycolysis; pyruvate from D-glyceraldehyde 3-phosphate: step 3/5. Its function is as follows. Catalyzes the interconversion of 2-phosphoglycerate and 3-phosphoglycerate. The polypeptide is 2,3-bisphosphoglycerate-independent phosphoglycerate mutase (Shewanella halifaxensis (strain HAW-EB4)).